A 346-amino-acid polypeptide reads, in one-letter code: Low-temperature-induced cysteine proteinase (346 aa).

Positions 1 to 17 (KLSKNKSDRYLPKVGDS) are cleaved as a propeptide — activation peptide. 5 cysteine pairs are disulfide-bonded: Cys-39–Cys-81, Cys-73–Cys-114, Cys-172–Cys-223, Cys-256–Cys-268, and Cys-262–Cys-283. Cys-42 is a catalytic residue. Active-site residues include His-178 and Asn-198. Asn-215 carries N-linked (GlcNAc...) asparagine glycosylation. The propeptide at 238–346 (NPPKPAPSPP…FGNGGKKSSS (109 aa)) is removed in mature form.

The protein belongs to the peptidase C1 family.

This chain is Low-temperature-induced cysteine proteinase, found in Solanum lycopersicum (Tomato).